The sequence spans 28 residues: Expansin-B1 (28 aa).

The Expansin-like CBD domain maps to 11–28 (MLLSLQGPXSLRMVSESG).

Belongs to the expansin family. Expansin B subfamily.

The protein resides in the secreted. It localises to the cell wall. It is found in the membrane. Its function is as follows. May cause loosening and extension of plant cell walls by disrupting non-covalent bonding between cellulose microfibrils and matrix glucans. In Pseudotsuga menziesii (Douglas-fir), this protein is Expansin-B1.